The sequence spans 1609 residues: Factor-induced gene 2 protein (1609 aa).

Positions 1–22 are cleaved as a signal peptide; it reads MNSFASLGLIYSVVNLLTRVEA. N-linked (GlcNAc...) asparagine glycosylation occurs at Asn-29. Disordered stretches follow at residues 129 to 165, 196 to 243, and 266 to 312; these read SSTL…SSTS, SSEI…EPLS, and TIPT…NYDV. The span at 137–148 shows a compositional bias: polar residues; that stretch reads QPHRTSHSSSSF. A compositionally biased stretch (low complexity) spans 150–165; that stretch reads LPVTAPSSSSLPSSTS. A compositionally biased stretch (polar residues) spans 196–212; that stretch reads SSEISGSTSPKSLESFD. Low complexity-rich tracts occupy residues 213–243 and 274–285; these read TTGT…EPLS and TSSLPPTLRSSS. The N-linked (GlcNAc...) asparagine glycan is linked to Asn-231. Polar residues predominate over residues 286 to 312; that stretch reads MAPTSGSDSISHNFTSPPSKTSGNYDV. 9 N-linked (GlcNAc...) asparagine glycosylation sites follow: Asn-298, Asn-347, Asn-386, Asn-426, Asn-495, Asn-535, Asn-661, Asn-674, and Asn-713. Residues 846 to 876 are disordered; the sequence is ATSEATSTSTQVSATSATATASESSTTSQVS. N-linked (GlcNAc...) asparagine glycans are attached at residues Asn-889, Asn-907, and Asn-1079. Residues 1231 to 1243 show a composition bias toward polar residues; that stretch reads CTQDVPTQSSSPA. The disordered stretch occupies residues 1231-1259; that stretch reads CTQDVPTQSSSPASTLAYSPSVSTSSSSS. Positions 1244-1259 are enriched in low complexity; that stretch reads STLAYSPSVSTSSSSS. N-linked (GlcNAc...) asparagine glycosylation occurs at Asn-1400. Gly-1588 carries the GPI-anchor amidated glycine lipid modification. A propeptide spans 1589–1609 (removed in mature form); the sequence is SASKFLCSKFFMIMVMVINFI.

N-glycosylated.

Its subcellular location is the secreted. The protein resides in the cell wall. It is found in the membrane. Functionally, required for efficient mating. Plays a role in maintenance of cell wall integrity during mating. Important for mating cell projection shape and conjugation bridge diameter. Plays a role in cell fusion and nuclear migration. This chain is Factor-induced gene 2 protein (FIG2), found in Saccharomyces cerevisiae (strain ATCC 204508 / S288c) (Baker's yeast).